Reading from the N-terminus, the 678-residue chain is Glycine--tRNA ligase beta subunit (678 aa).

The protein belongs to the class-II aminoacyl-tRNA synthetase family. As to quaternary structure, tetramer of two alpha and two beta subunits.

Its subcellular location is the cytoplasm. The enzyme catalyses tRNA(Gly) + glycine + ATP = glycyl-tRNA(Gly) + AMP + diphosphate. This chain is Glycine--tRNA ligase beta subunit, found in Streptococcus pneumoniae (strain ATCC BAA-255 / R6).